A 424-amino-acid polypeptide reads, in one-letter code: Kynureninase (424 aa).

Residues Leu-109, Thr-110, 137–140 (FPSD), Asp-222, His-225, and Tyr-247 each bind pyridoxal 5'-phosphate. Lys-248 carries the N6-(pyridoxal phosphate)lysine modification. Pyridoxal 5'-phosphate-binding residues include Trp-278 and Asn-306.

This sequence belongs to the kynureninase family. Homodimer. The cofactor is pyridoxal 5'-phosphate.

It catalyses the reaction L-kynurenine + H2O = anthranilate + L-alanine + H(+). The catalysed reaction is 3-hydroxy-L-kynurenine + H2O = 3-hydroxyanthranilate + L-alanine + H(+). It functions in the pathway amino-acid degradation; L-kynurenine degradation; L-alanine and anthranilate from L-kynurenine: step 1/1. It participates in cofactor biosynthesis; NAD(+) biosynthesis; quinolinate from L-kynurenine: step 2/3. Catalyzes the cleavage of L-kynurenine (L-Kyn) and L-3-hydroxykynurenine (L-3OHKyn) into anthranilic acid (AA) and 3-hydroxyanthranilic acid (3-OHAA), respectively. In Koribacter versatilis (strain Ellin345), this protein is Kynureninase.